Here is a 303-residue protein sequence, read N- to C-terminus: N-acetyl-D-glucosamine kinase (303 aa).

Residues glycine 4–lysine 11 and glycine 133–leucine 140 contribute to the ATP site. Histidine 157, cysteine 177, cysteine 179, and cysteine 184 together coordinate Zn(2+).

This sequence belongs to the ROK (NagC/XylR) family. NagK subfamily.

The enzyme catalyses N-acetyl-D-glucosamine + ATP = N-acetyl-D-glucosamine 6-phosphate + ADP + H(+). The protein operates within cell wall biogenesis; peptidoglycan recycling. In terms of biological role, catalyzes the phosphorylation of N-acetyl-D-glucosamine (GlcNAc) derived from cell-wall degradation, yielding GlcNAc-6-P. This chain is N-acetyl-D-glucosamine kinase, found in Salmonella agona (strain SL483).